Consider the following 439-residue polypeptide: CBL-interacting serine/threonine-protein kinase 26 (439 aa).

A Protein kinase domain is found at 13-268 (YEVGKTLGQG…IPEVLGDAWF (256 aa)). ATP-binding positions include 19–27 (LGQGTFAKV) and K42. The Proton acceptor role is filled by D136. Positions 154-183 (DFGLSALSRQVRGDGLLHTACGTPNYAAPE) are activation loop. A Phosphoserine modification is found at S158. T172 carries the phosphothreonine modification. The 25-residue stretch at 306 to 330 (EQPTSMNAFELISMSRALDLGNLFE) folds into the NAF domain. The interval 336 to 365 (KRETRFAAKGAANDLVQKIEEASKPLGFDI) is PPI.

This sequence belongs to the protein kinase superfamily. CAMK Ser/Thr protein kinase family. SNF1 subfamily. Interacts with RBOHF (via N-terminus). The cofactor is Mn(2+).

The protein resides in the cell membrane. The catalysed reaction is L-seryl-[protein] + ATP = O-phospho-L-seryl-[protein] + ADP + H(+). It catalyses the reaction L-threonyl-[protein] + ATP = O-phospho-L-threonyl-[protein] + ADP + H(+). CIPK serine-threonine protein kinases interact with CBL proteins. Binding of a CBL protein to the regulatory NAF domain of CIPK protein lead to the activation of the kinase in a calcium-dependent manner. Involved in the calcium-dependent regulation of reactive oxygen species production by the NADPH oxidase RBOHF. In Arabidopsis thaliana (Mouse-ear cress), this protein is CBL-interacting serine/threonine-protein kinase 26 (CIPK26).